The following is a 463-amino-acid chain: Quinolone resistance protein NorB (463 aa).

14 helical membrane-spanning segments follow: residues 17–37 (IGIVLSVITFWLFAQSLVNVV), 53–73 (IAVSITALFSGMFVVGAGGLA), 86–106 (IILNILGSLLIIISNIPLLLI), 107–127 (IGRLIQGLSAACIMPATLSII), 142–162 (YWSIGSWGGSGVCSFFGGAVA), 165–185 (LGWRWIFILSIIISLIALFLI), 201–221 (FDIKGLVLLVIMLLSLNILIT), 230–250 (SLLFITLLAITIGSFSLFIVL), 273–293 (TASNFLLNGVAGTLIVANTFV), 299–319 (YSSLQAGSLSITYLVMVLIMI), 334–354 (PMLIGTGVLIVGECLISLTFL), 357–377 (ILYVICCIIGYLFFGLGLGIY), 403–423 (MASALGGAFGVALSGAVYAIV), and 435–455 (IALWLNAGMGILSFVIILLLV).

It belongs to the major facilitator superfamily. TCR/Tet family.

The protein localises to the cell membrane. Its function is as follows. Multidrug efflux pump that acts independently of NorA and is one of the factors that confers resistance against diverse quinolones and chemical compounds. This is Quinolone resistance protein NorB (norB) from Staphylococcus aureus (strain MSSA476).